A 465-amino-acid chain; its full sequence is Antithrombin-III (465 aa).

The signal sequence occupies residues 1 to 32 (MISNGIGTVTAGKRSICLLPLLLIGLWGCVTC). 2 disulfide bridges follow: Cys41/Cys161 and Cys54/Cys128. Thr64 bears the Phosphothreonine mark. Ser69 carries the phosphoserine modification. Trp82 serves as a coordination point for heparin. An N-linked (GlcNAc...) asparagine glycan is attached at Asn129. A heparin-binding site is contributed by Arg162. Residue Asn168 is glycosylated (N-linked (GlcNAc...) asparagine). Residue Arg178 coordinates heparin. N-linked (GlcNAc...) asparagine glycans are attached at residues Asn188 and Asn225. Residues Cys280 and Cys463 are joined by a disulfide bond.

This sequence belongs to the serpin family. Forms protease inhibiting heterodimer with TMPRSS7. Post-translationally, phosphorylated by FAM20C in the extracellular medium. Plasma.

Its subcellular location is the secreted. The protein localises to the extracellular space. Its function is as follows. Most important serine protease inhibitor in plasma that regulates the blood coagulation cascade. AT-III inhibits thrombin, matriptase-3/TMPRSS7, as well as factors IXa, Xa and XIa. Its inhibitory activity is greatly enhanced in the presence of heparin. This Bos taurus (Bovine) protein is Antithrombin-III (SERPINC1).